We begin with the raw amino-acid sequence, 70 residues long: ATP synthase subunit c (70 aa).

Transmembrane regions (helical) follow at residues 4–24 (IAAA…NGLI) and 45–65 (LMFI…VIAF).

This sequence belongs to the ATPase C chain family. As to quaternary structure, F-type ATPases have 2 components, F(1) - the catalytic core - and F(0) - the membrane proton channel. F(1) has five subunits: alpha(3), beta(3), gamma(1), delta(1), epsilon(1). F(0) has three main subunits: a(1), b(2) and c(10-14). The alpha and beta chains form an alternating ring which encloses part of the gamma chain. F(1) is attached to F(0) by a central stalk formed by the gamma and epsilon chains, while a peripheral stalk is formed by the delta and b chains.

The protein resides in the cell membrane. F(1)F(0) ATP synthase produces ATP from ADP in the presence of a proton or sodium gradient. F-type ATPases consist of two structural domains, F(1) containing the extramembraneous catalytic core and F(0) containing the membrane proton channel, linked together by a central stalk and a peripheral stalk. During catalysis, ATP synthesis in the catalytic domain of F(1) is coupled via a rotary mechanism of the central stalk subunits to proton translocation. The protein is ATP synthase subunit c of Bacillus pumilus (strain SAFR-032).